The primary structure comprises 142 residues: Cell division protein SepF (142 aa).

This sequence belongs to the SepF family. In terms of assembly, homodimer. Interacts with FtsZ.

It is found in the cytoplasm. Its function is as follows. Cell division protein that is part of the divisome complex and is recruited early to the Z-ring. Probably stimulates Z-ring formation, perhaps through the cross-linking of FtsZ protofilaments. Its function overlaps with FtsA. This Geobacillus kaustophilus (strain HTA426) protein is Cell division protein SepF.